Consider the following 253-residue polypeptide: 4-phosphopantoate--beta-alanine ligase (253 aa).

ATP-binding positions include arginine 17, arginine 39, aspartate 179–asparagine 181, arginine 185–threonine 186, and asparagine 197–leucine 198.

It belongs to the archaeal phosphopantothenate synthetase family. Homodimer.

It carries out the reaction (R)-4-phosphopantoate + beta-alanine + ATP = (R)-4'-phosphopantothenate + AMP + diphosphate + H(+). It functions in the pathway cofactor biosynthesis; coenzyme A biosynthesis. Its function is as follows. Catalyzes the condensation of (R)-4-phosphopantoate and beta-alanine to 4'-phosphopantothenate in the CoA biosynthesis pathway. The sequence is that of 4-phosphopantoate--beta-alanine ligase from Methanosarcina mazei (strain ATCC BAA-159 / DSM 3647 / Goe1 / Go1 / JCM 11833 / OCM 88) (Methanosarcina frisia).